Here is a 566-residue protein sequence, read N- to C-terminus: Pyrophosphate--fructose 6-phosphate 1-phosphotransferase subunit beta 1 (566 aa).

The residue at position 16 (Ser-16) is a Phosphoserine. Position 105 (Gly-105) interacts with diphosphate. Asp-199 is a binding site for Mg(2+). Residues 227–229 (TID), 266–267 (KY), 274–276 (MGR), Glu-335, and 440–443 (YEGR) contribute to the substrate site. Asp-229 functions as the Proton acceptor in the catalytic mechanism.

Belongs to the phosphofructokinase type A (PFKA) family. PPi-dependent PFK group II subfamily. Clade 'Long' sub-subfamily. In terms of assembly, tetramer of two alpha (regulatory) and two beta (catalytic) chains. It depends on Mg(2+) as a cofactor.

Its subcellular location is the cytoplasm. The enzyme catalyses beta-D-fructose 6-phosphate + diphosphate = beta-D-fructose 1,6-bisphosphate + phosphate + H(+). It participates in carbohydrate degradation; glycolysis; D-glyceraldehyde 3-phosphate and glycerone phosphate from D-glucose: step 3/4. Its activity is regulated as follows. Allosterically activated by fructose 2,6-bisphosphate. Functionally, catalytic subunit of pyrophosphate--fructose 6-phosphate 1-phosphotransferase. Catalyzes the phosphorylation of D-fructose 6-phosphate, the first committing step of glycolysis. Uses inorganic phosphate (PPi) as phosphoryl donor instead of ATP like common ATP-dependent phosphofructokinases (ATP-PFKs), which renders the reaction reversible, and can thus function both in glycolysis and gluconeogenesis. This Arabidopsis thaliana (Mouse-ear cress) protein is Pyrophosphate--fructose 6-phosphate 1-phosphotransferase subunit beta 1.